A 967-amino-acid chain; its full sequence is MARPSLSRSNPLGFTPWPVTVITAVVYLALVVPLLVVHHVVPSAPSSSPKGLNLTEAWTDLQVLTNGFHPYNSHRNDEVHEWLLKRILELINSAPPASEYESVDEAKPDIVVFDDTQSNLTFSGRASGLGVYFESTNIMVYIRGWEEDKERWWEDPHGRPAGKGGVLVNAHYDSVSTGYGATDDGVGVVSCLQLIKYFTTPGHVPRRGLVLLFNNGEEDFLNGARVYSQHPISQLPHTFLNLEGAGAGGRATLFRSSDAEVTKPYMRAPHPFGSVLSANGFEAGLISSQTDYVVFEGDLGLRGLDVAFMEPRARYHTDEDDARHTSLDSVWHMLSAAVATTEGLVSDASGRFEGLPREDGRIASGSGPRGVWFDLFGSAFVVFELHTLFALSVTLLVVAPLVLLVTSIALNRADKMYLFRASASPEDSDGSEAVLLHGVRGFFRFPFLLVIPTAVTVGLAYLVTKFNPYIIHSSEYAVWSMMISAWVFLAWFVSRVADFARPSAFHRVYTLTWLFLVEWVLLVISTVYENKYGLAGGYFVFFAFAGTFLATWISYLELFALPRKSEYATQLALPSRRASSHGSRLGTASGEDVEDGEDEDEDDDGTTAEATETTSLLRGQRTTFANYVRVTGDYLRDDGDEPRQPNLYGHEQAWSIHLPKWVWVLQFLLTAPLVLTFVGPLALLLTSALRQTGQDGSSSLFIYIAVAALTTLLFIPLLPFIHRYTHHIPLFLLCVFAGTLIYNLVAFPFSPANRLKLFFIQEVDLDTGVNHASLSGAYPFVHDVASSLPSTAGQNITCDLDLLRPKCSWHGIPPQVVQPAEASKMKDWLSYNITRSDAEPKAQLSISGRNTRACKLVFDRPVLSFTVADSAYDPRFPHVSPDGTKEIRLWSREWGHTWTVDVEWAADTEETDEKGLRLSGRVVCLWSDGNTAGVIPALDEVRRYVPVWVGVSKLSDGLVEGSRRFEI.

Residues 1 to 16 lie on the Cytoplasmic side of the membrane; sequence MARPSLSRSNPLGFTP. The helical transmembrane segment at 17–37 threads the bilayer; sequence WPVTVITAVVYLALVVPLLVV. Residues 38–387 lie on the Vacuolar side of the membrane; it reads HHVVPSAPSS…SAFVVFELHT (350 aa). 2 N-linked (GlcNAc...) asparagine glycosylation sites follow: N53 and N119. Residues H171 and D183 each coordinate Zn(2+). Catalysis depends on E217, which acts as the Proton acceptor. The Zn(2+) site is built by E218, E243, and H316. Residues 388–408 form a helical membrane-spanning segment; the sequence is LFALSVTLLVVAPLVLLVTSI. At 409–441 the chain is on the cytoplasmic side; it reads ALNRADKMYLFRASASPEDSDGSEAVLLHGVRG. The helical transmembrane segment at 442–462 threads the bilayer; the sequence is FFRFPFLLVIPTAVTVGLAYL. The Vacuolar segment spans residues 463-472; sequence VTKFNPYIIH. A helical membrane pass occupies residues 473–493; it reads SSEYAVWSMMISAWVFLAWFV. The Cytoplasmic portion of the chain corresponds to 494–507; sequence SRVADFARPSAFHR. Residues 508–528 traverse the membrane as a helical segment; that stretch reads VYTLTWLFLVEWVLLVISTVY. Topologically, residues 529–532 are vacuolar; the sequence is ENKY. Residues 533 to 553 traverse the membrane as a helical segment; that stretch reads GLAGGYFVFFAFAGTFLATWI. Residues 554-663 lie on the Cytoplasmic side of the membrane; it reads SYLELFALPR…WSIHLPKWVW (110 aa). A disordered region spans residues 579–612; sequence SSHGSRLGTASGEDVEDGEDEDEDDDGTTAEATE. Residues 591–606 show a composition bias toward acidic residues; that stretch reads EDVEDGEDEDEDDDGT. A helical transmembrane segment spans residues 664–684; sequence VLQFLLTAPLVLTFVGPLALL. Residues 685–700 lie on the Vacuolar side of the membrane; the sequence is LTSALRQTGQDGSSSL. The chain crosses the membrane as a helical span at residues 701–721; that stretch reads FIYIAVAALTTLLFIPLLPFI. The Cytoplasmic segment spans residues 722 to 727; sequence HRYTHH. Residues 728 to 748 form a helical membrane-spanning segment; that stretch reads IPLFLLCVFAGTLIYNLVAFP. Over 749-967 the chain is Vacuolar; it reads FSPANRLKLF…LVEGSRRFEI (219 aa). 2 N-linked (GlcNAc...) asparagine glycosylation sites follow: N795 and N832.

It belongs to the peptidase M28 family. Requires Zn(2+) as cofactor.

Its subcellular location is the vacuole membrane. May be involved in vacuolar sorting and osmoregulation. The polypeptide is Vacuolar membrane protease (Neosartorya fischeri (strain ATCC 1020 / DSM 3700 / CBS 544.65 / FGSC A1164 / JCM 1740 / NRRL 181 / WB 181) (Aspergillus fischerianus)).